The following is a 243-amino-acid chain: UPF0246 protein SpyM51747 (243 aa).

It belongs to the UPF0246 family.

The polypeptide is UPF0246 protein SpyM51747 (Streptococcus pyogenes serotype M5 (strain Manfredo)).